The following is a 213-amino-acid chain: Redox-sensing transcriptional repressor Rex (213 aa).

Residues 18-57 (LYYRIFKRFHAEKIERANSKQIAEAIGIDSATVRRDFSYF) constitute a DNA-binding region (H-T-H motif). 92-97 (GIGNMG) is an NAD(+) binding site.

It belongs to the transcriptional regulatory Rex family. Homodimer.

The protein resides in the cytoplasm. Functionally, modulates transcription in response to changes in cellular NADH/NAD(+) redox state. Binds to the promoter of the aldehyde-alcohol dehydrogenase adhE gene. Functions as a redox-dependent repressor of adhE expression. The sequence is that of Redox-sensing transcriptional repressor Rex from Streptococcus pneumoniae (strain ATCC BAA-255 / R6).